Reading from the N-terminus, the 367-residue chain is Glutamate 5-kinase (367 aa).

Lys10 lines the ATP pocket. The substrate site is built by Ser50, Asp137, and Asn149. Residues 169-170 (TD) and 211-217 (TGGMGTK) contribute to the ATP site. Residues 275-353 (AGEITVDDGA…QEISEILGYE (79 aa)) form the PUA domain.

It belongs to the glutamate 5-kinase family.

It localises to the cytoplasm. The enzyme catalyses L-glutamate + ATP = L-glutamyl 5-phosphate + ADP. It participates in amino-acid biosynthesis; L-proline biosynthesis; L-glutamate 5-semialdehyde from L-glutamate: step 1/2. Its function is as follows. Catalyzes the transfer of a phosphate group to glutamate to form L-glutamate 5-phosphate. The polypeptide is Glutamate 5-kinase (Serratia proteamaculans (strain 568)).